The primary structure comprises 1448 residues: MGARNSVLSGKKADELEKIRLRPGGKKKYMLKHVVWAANELDRFGLAESLLENKEGCQKILSVLAPLVPTGSENLKSLYNTVCVIWCIHAEEKVKHTEEAKQIVQRHLVMETGTAETMPKTSRPTAPFSGRGGNYPVQQIGGNYTHLPLSPRTLNAWVKLIEEKKFGAEVVSGFQALSEGCLPYDINQMLNCVGDHQAAMQIIRDIINEEAADWDLQHPQQAPQQGQLREPSGSDIAGTTSTVEEQIQWMYRQQNPIPVGNIYRRWIQLGLQKCVRMYNPTNILDVKQGPKEPFQSYVDRFYKSLRAEQTDPAVKNWMTQTLLIQNANPDCKLVLKGLGTNPTLEEMLTACQGVGGPGQKARLMAEALKEALAPAPIPFAAAQQKGPRKPIKCWNCGKEGHSARQCRAPRRQGCWKCGKMDHVMAKCPNRQAGFFRPWPLGKEAPQFPHGSSASGADANCSPRRTSCGSAKELHALGQAAERKQREALQGGDRGFAAPQFSLWRRPVVTAHIEGQPVEVLLDTGADDSIVTGIELGPHYTPKIVGGIGGFINTKEYKNVEIEVLGKRIKGTIMTGDTPINIFGRNLLTALGMSLNLPIAKVEPVKSPLKPGKDGPKLKQWPLSKEKIVALREICEKMEKDGQLEEAPPTNPYNTPTFAIKKKDKNKWRMLIDFRELNRVTQDFTEVQLGIPHPAGLAKRKRITVLDIGDAYFSIPLDEEFRQYTAFTLPSVNNAEPGKRYIYKVLPQGWKGSPAIFQYTMRHVLEPFRKANPDVTLVQYMDDILIASDRTDLEHDRVVLQLKELLNSIGFSSPEEKFQKDPPFQWMGYELWPTKWKLQKIELPQRETWTVNDIQKLVGVLNWAAQIYPGIKTKHLCRLIRGKMTLTEEVQWTEMAEAEYEENKIILSQEQEGCYYQESKPLEATVIKSQDNQWSYKIHQEDKILKVGKFAKIKNTHTNGVRLLAHVIQKIGKEAIVIWGQVPKFHLPVEKDVWEQWWTDYWQVTWIPEWDFISTPPLVRLVFNLVKDPIEGEETYYVDGSCSKQSKEGKAGYITDRGKDKVKVLEQTTNQQAELEAFLMALTDSGPKANIIVDSQYVMGIITGCPTESESRLVNQIIEEMIKKTEIYVAWVPAHKGIGGNQEIDHLVSQGIRQVLFLEKIEPAQEEHSKYHSNIKELVFKFGLPRLVAKQIVDTCDKCHQKGEAIHGQVNSDLGTWQMDCTHLEGKIVIVAVHVASGFIEAEVIPQETGRQTALFLLKLASRWPITHLHTDNGANFASQEVKMVAWWAGIEHTFGVPYNPQSQGVVEAMNHHLKNQIDRIREQANSVETIVLMAVHCMNFKRRGGIGDMTPAERLINMITTEQEIQFQQSKNSKFKNFRVYYREGRDQLWKGPGELLWKGEGAVILKVGTDIKVVPRRKAKIIKDYGGGKEMDSSSHMEDTGEAREVA.

G2 is lipidated: N-myristoyl glycine; by host. Positions 16–22 (LEKIRLR) match the Nuclear export signal motif. A Nuclear localization signal motif is present at residues 26–32 (KKKYMLK). Low complexity predominate over residues 218-227 (HPQQAPQQGQ). The interval 218–237 (HPQQAPQQGQLREPSGSDIA) is disordered. 2 consecutive CCHC-type zinc fingers follow at residues 391–408 (IKCW…QCRA) and 412–429 (QGCW…KCPN). The segment at 440–461 (LGKEAPQFPHGSSASGADANCS) is disordered. The region spanning 517-586 (VEVLLDTGAD…TPINIFGRNL (70 aa)) is the Peptidase A2 domain. Residue D522 is the For protease activity; shared with dimeric partner of the active site. The region spanning 640-830 (DGQLEEAPPT…PPFQWMGYEL (191 aa)) is the Reverse transcriptase domain. Residues D706, D781, and D782 each contribute to the Mg(2+) site. The tract at residues 823-831 (FQWMGYELW) is RT 'primer grip'. The Tryptophan repeat motif motif lies at 993–1009 (WEQWWTDYWQVTWIPEW). One can recognise an RNase H type-1 domain in the interval 1029-1152 (IEGEETYYVD…IDHLVSQGIR (124 aa)). D1038, E1073, D1093, and D1144 together coordinate Mg(2+). An Integrase-type zinc finger spans residues 1158–1199 (EKIEPAQEEHSKYHSNIKELVFKFGLPRLVAKQIVDTCDKCH). Residues H1167, H1171, C1195, and C1198 each contribute to the Zn(2+) site. The Integrase catalytic domain occupies 1209-1359 (VNSDLGTWQM…TPAERLINMI (151 aa)). Mg(2+) is bound by residues D1219 and D1271. The integrase-type DNA-binding region spans 1378 to 1425 (FRVYYREGRDQLWKGPGELLWKGEGAVILKVGTDIKVVPRRKAKIIKD). The tract at residues 1426 to 1448 (YGGGKEMDSSSHMEDTGEAREVA) is disordered.

As to quaternary structure, homotrimer. Interacts with gp41 (via C-terminus). Homodimer. The active site consists of two apposed aspartic acid residues. In terms of assembly, heterodimer of p66 RT and p51 RT (RT p66/p51). Heterodimerization of RT is essential for DNA polymerase activity. Despite the sequence identities, p66 RT and p51 RT have distinct folding. As to quaternary structure, homotetramer; may further associate as a homohexadecamer. Mg(2+) serves as cofactor. Post-translationally, specific enzymatic cleavages by the viral protease yield mature proteins. The protease is released by autocatalytic cleavage. The polyprotein is cleaved during and after budding, this process is termed maturation. Proteolytic cleavage of p66 RT removes the RNase H domain to yield the p51 RT subunit. In terms of processing, capsid protein p24 is phosphorylated.

Its subcellular location is the virion. The protein localises to the host nucleus. It is found in the host cytoplasm. It localises to the host cell membrane. The catalysed reaction is Specific for a P1 residue that is hydrophobic, and P1' variable, but often Pro.. It carries out the reaction Endohydrolysis of RNA in RNA/DNA hybrids. Three different cleavage modes: 1. sequence-specific internal cleavage of RNA. Human immunodeficiency virus type 1 and Moloney murine leukemia virus enzymes prefer to cleave the RNA strand one nucleotide away from the RNA-DNA junction. 2. RNA 5'-end directed cleavage 13-19 nucleotides from the RNA end. 3. DNA 3'-end directed cleavage 15-20 nucleotides away from the primer terminus.. The enzyme catalyses 3'-end directed exonucleolytic cleavage of viral RNA-DNA hybrid.. It catalyses the reaction DNA(n) + a 2'-deoxyribonucleoside 5'-triphosphate = DNA(n+1) + diphosphate. The viral protease is inhibited by many synthetic protease inhibitors (PIs), such as amprenavir, atazanavir, indinavir, loprinavir, nelfinavir, ritonavir and saquinavir. RT can be inhibited either by nucleoside RT inhibitors (NRTIs) or by non nucleoside RT inhibitors (NNRTIs). NRTIs act as chain terminators, whereas NNRTIs inhibit DNA polymerization by binding a small hydrophobic pocket near the RT active site and inducing an allosteric change in this region. Classical NRTIs are abacavir, adefovir (PMEA), didanosine (ddI), lamivudine (3TC), stavudine (d4T), tenofovir (PMPA), zalcitabine (ddC), and zidovudine (AZT). Classical NNRTIs are atevirdine (BHAP U-87201E), delavirdine, efavirenz (DMP-266), emivirine (I-EBU), and nevirapine (BI-RG-587). The tritherapies used as a basic effective treatment of AIDS associate two NRTIs and one NNRTI. Use of protease inhibitors in tritherapy regimens permit more ambitious therapeutic strategies. Gag-Pol polyprotein and Gag polyprotein may regulate their own translation, by the binding genomic RNA in the 5'-UTR. At low concentration, Gag-Pol and Gag would promote translation, whereas at high concentration, the polyproteins encapsidate genomic RNA and then shut off translation. In terms of biological role, matrix protein p17 has two main functions: in infected cell, it targets Gag and Gag-pol polyproteins to the plasma membrane via a multipartite membrane-binding signal, that includes its myristointegration complex. The myristoylation signal and the NLS exert conflicting influences its subcellular localization. The key regulation of these motifs might be phosphorylation of a portion of MA molecules on the C-terminal tyrosine at the time of virus maturation, by virion-associated cellular tyrosine kinase. Implicated in the release from host cell mediated by Vpu. Its function is as follows. Capsid protein p24 forms the conical core that encapsulates the genomic RNA-nucleocapsid complex in the virion. The core is constituted by capsid protein hexamer subunits. The core is disassembled soon after virion entry. Interaction with host PPIA/CYPA protects the virus from restriction by host TRIM5-alpha and from an unknown antiviral activity in host cells. This capsid restriction by TRIM5 is one of the factors which restricts SIV to the simian species. Functionally, nucleocapsid protein p7 encapsulates and protects viral dimeric unspliced (genomic) RNA. Binds these RNAs through its zinc fingers. Facilitates rearangement of nucleic acid secondary structure during retrotranscription of genomic RNA. This capability is referred to as nucleic acid chaperone activity. The aspartyl protease mediates proteolytic cleavages of Gag and Gag-Pol polyproteins during or shortly after the release of the virion from the plasma membrane. Cleavages take place as an ordered, step-wise cascade to yield mature proteins. This process is called maturation. Displays maximal activity during the budding process just prior to particle release from the cell. Also cleaves Nef and Vif, probably concomitantly with viral structural proteins on maturation of virus particles. Hydrolyzes host EIF4GI and PABP1 in order to shut off the capped cellular mRNA translation. The resulting inhibition of cellular protein synthesis serves to ensure maximal viral gene expression and to evade host immune response. In terms of biological role, reverse transcriptase/ribonuclease H (RT) is a multifunctional enzyme that converts the viral dimeric RNA genome into dsDNA in the cytoplasm, shortly after virus entry into the cell. This enzyme displays a DNA polymerase activity that can copy either DNA or RNA templates, and a ribonuclease H (RNase H) activity that cleaves the RNA strand of RNA-DNA heteroduplexes in a partially processive 3' to 5' endonucleasic mode. Conversion of viral genomic RNA into dsDNA requires many steps. A tRNA binds to the primer-binding site (PBS) situated at the 5'-end of the viral RNA. RT uses the 3' end of the tRNA primer to perform a short round of RNA-dependent minus-strand DNA synthesis. The reading proceeds through the U5 region and ends after the repeated (R) region which is present at both ends of viral RNA. The portion of the RNA-DNA heteroduplex is digested by the RNase H, resulting in a ssDNA product attached to the tRNA primer. This ssDNA/tRNA hybridizes with the identical R region situated at the 3' end of viral RNA. This template exchange, known as minus-strand DNA strong stop transfer, can be either intra- or intermolecular. RT uses the 3' end of this newly synthesized short ssDNA to perform the RNA-dependent minus-strand DNA synthesis of the whole template. RNase H digests the RNA template except for two polypurine tracts (PPTs) situated at the 5'-end and near the center of the genome. It is not clear if both polymerase and RNase H activities are simultaneous. RNase H can probably proceed both in a polymerase-dependent (RNA cut into small fragments by the same RT performing DNA synthesis) and a polymerase-independent mode (cleavage of remaining RNA fragments by free RTs). Secondly, RT performs DNA-directed plus-strand DNA synthesis using the PPTs that have not been removed by RNase H as primers. PPTs and tRNA primers are then removed by RNase H. The 3' and 5' ssDNA PBS regions hybridize to form a circular dsDNA intermediate. Strand displacement synthesis by RT to the PBS and PPT ends produces a blunt ended, linear dsDNA copy of the viral genome that includes long terminal repeats (LTRs) at both ends. Its function is as follows. Integrase catalyzes viral DNA integration into the host chromosome, by performing a series of DNA cutting and joining reactions. This enzyme activity takes place after virion entry into a cell and reverse transcription of the RNA genome in dsDNA. The first step in the integration process is 3' processing. This step requires a complex comprising the viral genome, matrix protein, Vpr and integrase. This complex is called the pre-integration complex (PIC). The integrase protein removes 2 nucleotides from each 3' end of the viral DNA, leaving recessed CA OH's at the 3' ends. In the second step, the PIC enters cell nucleus. This process is mediated through integrase and Vpr proteins, and allows the virus to infect a non dividing cell. This ability to enter the nucleus is specific of lentiviruses, other retroviruses cannot and rely on cell division to access cell chromosomes. In the third step, termed strand transfer, the integrase protein joins the previously processed 3' ends to the 5' ends of strands of target cellular DNA at the site of integration. The 5'-ends are produced by integrase-catalyzed staggered cuts, 5 bp apart. A Y-shaped, gapped, recombination intermediate results, with the 5'-ends of the viral DNA strands and the 3' ends of target DNA strands remaining unjoined, flanking a gap of 5 bp. The last step is viral DNA integration into host chromosome. This involves host DNA repair synthesis in which the 5 bp gaps between the unjoined strands are filled in and then ligated. Since this process occurs at both cuts flanking the SIV genome, a 5 bp duplication of host DNA is produced at the ends of SIV integration. Alternatively, Integrase may catalyze the excision of viral DNA just after strand transfer, this is termed disintegration. This is Gag-Pol polyprotein (gag-pol) from Cercopithecidae (Old World monkeys).